The primary structure comprises 122 residues: Thioredoxin H-type (122 aa).

A Thioredoxin domain is found at 2–118 (AAEEGVVIAC…IVKHVGATAA (117 aa)). Cys-40 and Cys-43 are oxidised to a cystine.

It is found in the cytoplasm. Functionally, participates in various redox reactions through the reversible oxidation of the active center dithiol to a disulfide. The H form is known to activate a number of cytosolic enzymes. The chain is Thioredoxin H-type (TRXH) from Oryza sativa subsp. indica (Rice).